Reading from the N-terminus, the 327-residue chain is Aldo-keto reductase family 1 member A1 (327 aa).

NADP(+) contacts are provided by residues Gly13–Gly22, Thr23, Trp24, and Asp47. Tyr52 serves as the catalytic Proton donor. The NADP(+) site is built by Ser164, Asn165, Ser213, Leu215, Ser217, Lys265, Ser266, Val267, Thr268, Arg271, Gln274, and Asn275.

Belongs to the aldo/keto reductase family.

The protein localises to the cytoplasm. Its subcellular location is the cytosol. It localises to the apical cell membrane. The enzyme catalyses a primary alcohol + NADP(+) = an aldehyde + NADPH + H(+). It catalyses the reaction S-nitroso-CoA + NADPH + H(+) = sulfinamide-CoA + NADP(+). The catalysed reaction is S-nitrosoglutathione + NADPH + H(+) = S-(hydroxysulfenamide)glutathione + NADP(+). Functionally, catalyzes the NADPH-dependent reduction of a wide variety of carbonyl-containing compounds to their corresponding alcohols. Displays enzymatic activity towards endogenous metabolites such as aromatic and aliphatic aldehydes, ketones, monosaccharides and bile acids. Acts as an aldehyde-detoxification enzyme. Also acts as an inhibitor of protein S-nitrosylation by mediating degradation of S-nitroso-coenzyme A (S-nitroso-CoA), a cofactor required to S-nitrosylate proteins. Also acts as a S-nitroso-glutathione reductase by catalyzing the NADPH-dependent reduction of S-nitrosoglutathione. Displays no reductase activity towards retinoids. This Gallus gallus (Chicken) protein is Aldo-keto reductase family 1 member A1 (AKR1A1).